The sequence spans 217 residues: 3,4-dihydroxy-2-butanone 4-phosphate synthase (217 aa).

D-ribulose 5-phosphate is bound by residues 37 to 38 (RE), D42, 150 to 154 (RGGHT), and E174. Position 38 (E38) interacts with Mg(2+). Mg(2+) is bound at residue H153.

Belongs to the DHBP synthase family. In terms of assembly, homodimer. Mg(2+) serves as cofactor. The cofactor is Mn(2+).

The catalysed reaction is D-ribulose 5-phosphate = (2S)-2-hydroxy-3-oxobutyl phosphate + formate + H(+). Its pathway is cofactor biosynthesis; riboflavin biosynthesis; 2-hydroxy-3-oxobutyl phosphate from D-ribulose 5-phosphate: step 1/1. Functionally, catalyzes the conversion of D-ribulose 5-phosphate to formate and 3,4-dihydroxy-2-butanone 4-phosphate. In Salmonella heidelberg (strain SL476), this protein is 3,4-dihydroxy-2-butanone 4-phosphate synthase.